A 157-amino-acid polypeptide reads, in one-letter code: Small ribosomal subunit protein uS7 (157 aa).

The protein belongs to the universal ribosomal protein uS7 family. Part of the 30S ribosomal subunit. Contacts proteins S9 and S11.

Its function is as follows. One of the primary rRNA binding proteins, it binds directly to 16S rRNA where it nucleates assembly of the head domain of the 30S subunit. Is located at the subunit interface close to the decoding center, probably blocks exit of the E-site tRNA. The protein is Small ribosomal subunit protein uS7 of Leptospira biflexa serovar Patoc (strain Patoc 1 / Ames).